We begin with the raw amino-acid sequence, 551 residues long: Steroid transmembrane transporter SLC22A24 (551 aa).

Transmembrane regions (helical) follow at residues 16–36, 146–166, 174–194, 204–222, 235–255, 260–280, 350–370, 378–398, 410–430, 435–455, 469–489, and 496–516; these read FQIL…PHTV, SVAK…GGHL, FIVT…AFAP, FLTG…LLIL, ALIF…AFGI, HLQL…RWLS, ICLL…LLIN, VFLL…LGNF, IIFM…TQEM, LVLA…TAVL, LGVI…LMIL, and LPWI…LLLP. The tract at residues 524–551 is disordered; sequence PDSIQDVENKRKSSREVKKDAVAKVTPF. Over residues 530–545 the composition is skewed to basic and acidic residues; that stretch reads VENKRKSSREVKKDAV.

In terms of tissue distribution, localized to the kidney. Mainly expressed in the late segments of proximal tubules.

It is found in the cell membrane. The enzyme catalyses estrone 3-sulfate(out) + glutarate(in) = estrone 3-sulfate(in) + glutarate(out). It carries out the reaction 17beta-estradiol 17-O-(beta-D-glucuronate)(out) + glutarate(in) = 17beta-estradiol 17-O-(beta-D-glucuronate)(in) + glutarate(out). It catalyses the reaction dehydroepiandrosterone 3-sulfate(out) + glutarate(in) = dehydroepiandrosterone 3-sulfate(in) + glutarate(out). In terms of biological role, renal transmembrane organic anion/dicarboxylate exchanger that participates in the reabsorption of conjugated steroids, as well as bile acids, driven by an outward gradient of dicarboxylates such as glutarate or succinate. Transports estrone 3-sulfate and estradiol-17-glucuronide (17beta-estradiol 17-O-(beta-D-glucuronate)), but not androstanediol glucuronide (5alpha-androstane-3alpha,17beta-diol 3-O-(beta-D-glucuronate)), nor taurocholate. Prefers sulfate conjugates of steroids rather than glucuronide conjugates. This chain is Steroid transmembrane transporter SLC22A24, found in Rattus norvegicus (Rat).